We begin with the raw amino-acid sequence, 159 residues long: Large ribosomal subunit protein uL22 (159 aa).

The interval 129 to 159 (VEGQQKAKMARQKAVTSVVKAPSKTQGGVQK) is disordered.

It belongs to the universal ribosomal protein uL22 family. As to quaternary structure, part of the 50S ribosomal subunit.

This protein binds specifically to 23S rRNA; its binding is stimulated by other ribosomal proteins, e.g. L4, L17, and L20. It is important during the early stages of 50S assembly. It makes multiple contacts with different domains of the 23S rRNA in the assembled 50S subunit and ribosome. Functionally, the globular domain of the protein is located near the polypeptide exit tunnel on the outside of the subunit, while an extended beta-hairpin is found that lines the wall of the exit tunnel in the center of the 70S ribosome. The polypeptide is Large ribosomal subunit protein uL22 (rplV) (Mycoplasma pneumoniae (strain ATCC 29342 / M129 / Subtype 1) (Mycoplasmoides pneumoniae)).